The primary structure comprises 161 residues: Nucleotide-binding protein PputGB1_4497 (161 aa).

Belongs to the YajQ family.

Its function is as follows. Nucleotide-binding protein. The polypeptide is Nucleotide-binding protein PputGB1_4497 (Pseudomonas putida (strain GB-1)).